The chain runs to 160 residues: Cytochrome b6-f complex subunit 4 (160 aa).

The next 3 membrane-spanning stretches (helical) occupy residues L36–V56, L95–E115, and T131–I151.

This sequence belongs to the cytochrome b family. PetD subfamily. In terms of assembly, the 4 large subunits of the cytochrome b6-f complex are cytochrome b6, subunit IV (17 kDa polypeptide, petD), cytochrome f and the Rieske protein, while the 4 small subunits are petG, petL, petM and petN. The complex functions as a dimer.

The protein resides in the plastid. Its subcellular location is the chloroplast thylakoid membrane. Component of the cytochrome b6-f complex, which mediates electron transfer between photosystem II (PSII) and photosystem I (PSI), cyclic electron flow around PSI, and state transitions. In Spinacia oleracea (Spinach), this protein is Cytochrome b6-f complex subunit 4.